We begin with the raw amino-acid sequence, 336 residues long: Glycerol-3-phosphate dehydrogenase [NAD(P)+] (336 aa).

NADPH-binding residues include Ser-11, Trp-12, Arg-32, and Lys-109. Sn-glycerol 3-phosphate-binding residues include Lys-109, Gly-140, and Ser-142. Residue Ala-144 coordinates NADPH. Sn-glycerol 3-phosphate-binding residues include Lys-195, Asp-248, Ser-258, Arg-259, and Asn-260. The active-site Proton acceptor is Lys-195. Arg-259 serves as a coordination point for NADPH. NADPH contacts are provided by Val-283 and Glu-285.

Belongs to the NAD-dependent glycerol-3-phosphate dehydrogenase family.

The protein resides in the cytoplasm. The enzyme catalyses sn-glycerol 3-phosphate + NAD(+) = dihydroxyacetone phosphate + NADH + H(+). The catalysed reaction is sn-glycerol 3-phosphate + NADP(+) = dihydroxyacetone phosphate + NADPH + H(+). It participates in membrane lipid metabolism; glycerophospholipid metabolism. Its function is as follows. Catalyzes the reduction of the glycolytic intermediate dihydroxyacetone phosphate (DHAP) to sn-glycerol 3-phosphate (G3P), the key precursor for phospholipid synthesis. This is Glycerol-3-phosphate dehydrogenase [NAD(P)+] from Leuconostoc mesenteroides subsp. mesenteroides (strain ATCC 8293 / DSM 20343 / BCRC 11652 / CCM 1803 / JCM 6124 / NCDO 523 / NBRC 100496 / NCIMB 8023 / NCTC 12954 / NRRL B-1118 / 37Y).